The sequence spans 207 residues: MADILTQLQTCLDQLATQFYATIGYLSTYHDNSPAIPHPDVPDAAPALAKIPKNSTAPPVPAGAPVPAQSQASPPAQNPAHGAAGAGTSVGEGGQTPGPAAGAGADPNLPAPDSPRTFASRQRELARDLIIKEQQIEYLISVLPGIDSSEAEQEKRIRELEGELRRVEEERELKMRELKRLRRTLENVLRAVETGLYGDRELLERYS.

The interval 37–121 (PHPDVPDAAP…PDSPRTFASR (85 aa)) is disordered. The segment covering 65–80 (PVPAQSQASPPAQNPA) has biased composition (low complexity). The span at 84–96 (AGAGTSVGEGGQT) shows a compositional bias: gly residues. A compositionally biased stretch (low complexity) spans 97–108 (PGPAAGAGADPN). A coiled-coil region spans residues 146 to 196 (IDSSEAEQEKRIRELEGELRRVEEERELKMRELKRLRRTLENVLRAVETGL).

This sequence belongs to the Mediator complex subunit 21 family. In terms of assembly, component of the Mediator complex.

Its subcellular location is the nucleus. Functionally, component of the Mediator complex, a coactivator involved in the regulated transcription of nearly all RNA polymerase II-dependent genes. Mediator functions as a bridge to convey information from gene-specific regulatory proteins to the basal RNA polymerase II transcription machinery. Mediator is recruited to promoters by direct interactions with regulatory proteins and serves as a scaffold for the assembly of a functional preinitiation complex with RNA polymerase II and the general transcription factors. The protein is Mediator of RNA polymerase II transcription subunit 21 (srb7) of Neosartorya fischeri (strain ATCC 1020 / DSM 3700 / CBS 544.65 / FGSC A1164 / JCM 1740 / NRRL 181 / WB 181) (Aspergillus fischerianus).